Here is a 239-residue protein sequence, read N- to C-terminus: Putative antitoxin VapB45 (239 aa).

In terms of biological role, possibly the antitoxin component of a type II toxin-antitoxin (TA) system. Its cognate toxin is VapC45. The sequence is that of Putative antitoxin VapB45 from Mycobacterium tuberculosis (strain ATCC 25618 / H37Rv).